Here is a 644-residue protein sequence, read N- to C-terminus: Exoribonuclease 2 (644 aa).

Residues 189–516 (REDLTSLDFV…NHRLLKAVIK (328 aa)) form the RNB domain. The region spanning 561 to 643 (GTRFAAEIVD…ETRSIIARPV (83 aa)) is the S1 motif domain.

This sequence belongs to the RNR ribonuclease family. RNase II subfamily.

The protein localises to the cytoplasm. It carries out the reaction Exonucleolytic cleavage in the 3'- to 5'-direction to yield nucleoside 5'-phosphates.. In terms of biological role, involved in mRNA degradation. Hydrolyzes single-stranded polyribonucleotides processively in the 3' to 5' direction. This chain is Exoribonuclease 2, found in Shigella flexneri serotype 5b (strain 8401).